The sequence spans 379 residues: Queuine tRNA-ribosyltransferase (379 aa).

Residue Asp-94 is the Proton acceptor of the active site. Substrate contacts are provided by residues 94-98 (DSGGF), Asp-148, Gln-191, and Gly-218. The interval 249–255 (GVGSPDA) is RNA binding. The active-site Nucleophile is Asp-268. Positions 273–277 (TRIAR) are RNA binding; important for wobble base 34 recognition. Positions 306, 308, 311, and 337 each coordinate Zn(2+).

Belongs to the queuine tRNA-ribosyltransferase family. Homodimer. Within each dimer, one monomer is responsible for RNA recognition and catalysis, while the other monomer binds to the replacement base PreQ1. Zn(2+) is required as a cofactor.

The catalysed reaction is 7-aminomethyl-7-carbaguanine + guanosine(34) in tRNA = 7-aminomethyl-7-carbaguanosine(34) in tRNA + guanine. It functions in the pathway tRNA modification; tRNA-queuosine biosynthesis. In terms of biological role, catalyzes the base-exchange of a guanine (G) residue with the queuine precursor 7-aminomethyl-7-deazaguanine (PreQ1) at position 34 (anticodon wobble position) in tRNAs with GU(N) anticodons (tRNA-Asp, -Asn, -His and -Tyr). Catalysis occurs through a double-displacement mechanism. The nucleophile active site attacks the C1' of nucleotide 34 to detach the guanine base from the RNA, forming a covalent enzyme-RNA intermediate. The proton acceptor active site deprotonates the incoming PreQ1, allowing a nucleophilic attack on the C1' of the ribose to form the product. After dissociation, two additional enzymatic reactions on the tRNA convert PreQ1 to queuine (Q), resulting in the hypermodified nucleoside queuosine (7-(((4,5-cis-dihydroxy-2-cyclopenten-1-yl)amino)methyl)-7-deazaguanosine). This Staphylococcus aureus (strain bovine RF122 / ET3-1) protein is Queuine tRNA-ribosyltransferase.